The sequence spans 132 residues: Small ribosomal subunit protein uS11 (132 aa).

Belongs to the universal ribosomal protein uS11 family. As to quaternary structure, part of the 30S ribosomal subunit. Interacts with proteins S7 and S18. Binds to IF-3.

Functionally, located on the platform of the 30S subunit, it bridges several disparate RNA helices of the 16S rRNA. Forms part of the Shine-Dalgarno cleft in the 70S ribosome. This is Small ribosomal subunit protein uS11 from Chlamydia trachomatis serovar A (strain ATCC VR-571B / DSM 19440 / HAR-13).